A 539-amino-acid chain; its full sequence is Probable malate:quinone oxidoreductase (539 aa).

It belongs to the MQO family. Requires FAD as cofactor.

The enzyme catalyses (S)-malate + a quinone = a quinol + oxaloacetate. Its pathway is carbohydrate metabolism; tricarboxylic acid cycle; oxaloacetate from (S)-malate (quinone route): step 1/1. The sequence is that of Probable malate:quinone oxidoreductase from Sodalis glossinidius (strain morsitans).